An 84-amino-acid polypeptide reads, in one-letter code: MARKPASSQDFETTLAQLENIVTHLENGDLPLEEALKEFEQGVQLAKLGQERLQQAEQRIQILLQKTEDAPLNDYKGNDYEGNA.

The protein belongs to the XseB family. Heterooligomer composed of large and small subunits.

The protein localises to the cytoplasm. The catalysed reaction is Exonucleolytic cleavage in either 5'- to 3'- or 3'- to 5'-direction to yield nucleoside 5'-phosphates.. Bidirectionally degrades single-stranded DNA into large acid-insoluble oligonucleotides, which are then degraded further into small acid-soluble oligonucleotides. The protein is Exodeoxyribonuclease 7 small subunit of Haemophilus influenzae (strain 86-028NP).